A 465-amino-acid polypeptide reads, in one-letter code: UDP-N-acetylglucosamine 1-carboxyvinyltransferase (465 aa).

22–23 contacts phosphoenolpyruvate; it reads KN. Arg-94 serves as a coordination point for UDP-N-acetyl-alpha-D-glucosamine. Cys-119 serves as the catalytic Proton donor. A 2-(S-cysteinyl)pyruvic acid O-phosphothioketal modification is found at Cys-119. Residues Asp-313 and Val-335 each coordinate UDP-N-acetyl-alpha-D-glucosamine.

The protein belongs to the EPSP synthase family. MurA subfamily.

It is found in the cytoplasm. The catalysed reaction is phosphoenolpyruvate + UDP-N-acetyl-alpha-D-glucosamine = UDP-N-acetyl-3-O-(1-carboxyvinyl)-alpha-D-glucosamine + phosphate. It participates in cell wall biogenesis; peptidoglycan biosynthesis. In terms of biological role, cell wall formation. Adds enolpyruvyl to UDP-N-acetylglucosamine. This chain is UDP-N-acetylglucosamine 1-carboxyvinyltransferase, found in Protochlamydia amoebophila (strain UWE25).